The sequence spans 78 residues: Keratin-associated protein 6-5 (78 aa).

Positions 3-76 (GYYGNYYGGR…GSGYGSGFGY (74 aa)) are 25 X 2 AA repeats of G-[YCGS].

It belongs to the KRTAP type 6 family. As to quaternary structure, interacts with hair keratins. Strong expression in narrowly defined pattern restricted to the lower and middle cortical regions of the hair shaft in both developing and cycling hair. During hair follicle regression (catagen), expression levels decrease until expression is no longer detectable in follicles at resting stage (telogen).

Its function is as follows. In the hair cortex, hair keratin intermediate filaments are embedded in an interfilamentous matrix, consisting of hair keratin-associated proteins (KRTAP), which are essential for the formation of a rigid and resistant hair shaft through their extensive disulfide bond cross-linking with abundant cysteine residues of hair keratins. The matrix proteins include the high-sulfur and high-glycine-tyrosine keratins. This chain is Keratin-associated protein 6-5 (Krtap6-5), found in Mus musculus (Mouse).